An 815-amino-acid chain; its full sequence is Cell division control protein 48 homolog D (815 aa).

N-acetylalanine is present on alanine 2. The residue at position 42 (serine 42) is a Phosphoserine. ATP-binding positions include glycine 249 to threonine 256 and glycine 522 to threonine 529. Phosphoserine is present on serine 720. The interval glycine 772–serine 815 is disordered. Over residues alanine 780–valine 798 the composition is skewed to low complexity.

Belongs to the AAA ATPase family.

Its subcellular location is the nucleus. It localises to the cytoplasm. It is found in the cytoskeleton. The protein resides in the phragmoplast. Probably functions in cell division and growth processes. Interacts with certain SNAREs as part of specialized membrane fusion events where vesicles from the same organelle fuse (homotypic fusion). In Arabidopsis thaliana (Mouse-ear cress), this protein is Cell division control protein 48 homolog D (CDC48D).